The sequence spans 1941 residues: Integrin beta-like protein B (1941 aa).

An N-terminal signal peptide occupies residues 1 to 20; sequence MKNIIKYLFIFLCFLIITEA. Residues 21 to 1871 lie on the Extracellular side of the membrane; sequence THFRYGTISW…VTTQNSSNKT (1851 aa). One can recognise an EGF-like domain in the interval 420-457; that stretch reads YGDKCTVLPPCKNGVPNGGVNGDGKCLCNNGWTGSDCS. Disulfide bonds link C430–C445 and C447–C456. Residues 513–696 enclose the VWFA domain; that stretch reads DVYLLVDANM…AGIKAVSSKL (184 aa). N-linked (GlcNAc...) asparagine glycosylation is found at N1400, N1505, N1530, N1606, N1652, N1738, N1777, N1848, N1866, and N1869. Residues 1872–1892 form a helical membrane-spanning segment; that stretch reads VLSGAIAGAAAGTALIAAAMW. Residues 1893–1941 lie on the Cytoplasmic side of the membrane; it reads KMLRKAAPPTDAFFDEGAFLGDGVNSNPMYQESKNGGENPLYLASNETL. Residues 1921 to 1941 form a disordered region; it reads MYQESKNGGENPLYLASNETL.

Belongs to the SIB family. As to quaternary structure, interacts with talA/talin.

It is found in the membrane. Functionally, implicated in cellular adhesion. The protein is Integrin beta-like protein B (sibB) of Dictyostelium discoideum (Social amoeba).